The primary structure comprises 192 residues: Ubiquitin-conjugating enzyme E2 T (192 aa).

The UBC core domain occupies 2–152; that stretch reads QRVSRLKREL…AKKWTEKHAL (151 aa). The active-site Glycyl thioester intermediate is cysteine 86. The disordered stretch occupies residues 150–192; sequence HALPAPQGSDKESQEKSGSSEGTSHKRKSAEIAEESKKPCREP. A compositionally biased stretch (basic and acidic residues) spans 178–192; the sequence is SAEIAEESKKPCREP.

Belongs to the ubiquitin-conjugating enzyme family.

Its subcellular location is the nucleus. It catalyses the reaction S-ubiquitinyl-[E1 ubiquitin-activating enzyme]-L-cysteine + [E2 ubiquitin-conjugating enzyme]-L-cysteine = [E1 ubiquitin-activating enzyme]-L-cysteine + S-ubiquitinyl-[E2 ubiquitin-conjugating enzyme]-L-cysteine.. The protein operates within protein modification; protein ubiquitination. In terms of biological role, accepts ubiquitin from the E1 complex and catalyzes its covalent attachment to other proteins. Catalyzes monoubiquitination. Involved in DNA repair. In Xenopus laevis (African clawed frog), this protein is Ubiquitin-conjugating enzyme E2 T (ube2t).